The following is a 262-amino-acid chain: Small ribosomal subunit protein uS2 (262 aa).

Residues 228–262 (VSNEEVAAEQNINLDDKEESEQAETTEENTSVESN) are disordered. Residues 243 to 254 (DKEESEQAETTE) are compositionally biased toward acidic residues.

It belongs to the universal ribosomal protein uS2 family.

This Staphylococcus epidermidis (strain ATCC 35984 / DSM 28319 / BCRC 17069 / CCUG 31568 / BM 3577 / RP62A) protein is Small ribosomal subunit protein uS2.